A 910-amino-acid chain; its full sequence is DNA mismatch repair protein MutS (910 aa).

Polar residues predominate over residues 1–15 (MPRSAAQSEEQTLQG). Residues 1-94 (MPRSAAQSEE…EPAWAHHSQV (94 aa)) are disordered. A compositionally biased stretch (low complexity) spans 44 to 54 (DASLSADAAAR). An ATP-binding site is contributed by 726–733 (GPNASGKS).

Belongs to the DNA mismatch repair MutS family.

In terms of biological role, this protein is involved in the repair of mismatches in DNA. It is possible that it carries out the mismatch recognition step. This protein has a weak ATPase activity. The polypeptide is DNA mismatch repair protein MutS (Synechococcus sp. (strain WH7803)).